The primary structure comprises 200 residues: Large ribosomal subunit protein bL25 (200 aa).

Belongs to the bacterial ribosomal protein bL25 family. CTC subfamily. Part of the 50S ribosomal subunit; part of the 5S rRNA/L5/L18/L25 subcomplex. Contacts the 5S rRNA. Binds to the 5S rRNA independently of L5 and L18.

In terms of biological role, this is one of the proteins that binds to the 5S RNA in the ribosome where it forms part of the central protuberance. The chain is Large ribosomal subunit protein bL25 from Pseudomonas fluorescens (strain SBW25).